Consider the following 199-residue polypeptide: MKEIISVTILLILIMDPLGNLPIFMSILKHLEPQRRKKILIREMMIALLIMLLFLFAGEKILIFLNLRAETVSVSGGIILFLIAIKMIFPTYESKKKSGNIIKREEPFLVPLAIPLVAGPSLLATLMLLSHQYPKKILYLIGSLLIAWMITVVILLLSDIFLRLFGSKGVNALERLMGLILIMLSTQMFLDGIKSWFYI.

A run of 6 helical transmembrane segments spans residues 7–29 (VTIL…SILK), 39–58 (ILIR…LFAG), 71–93 (TVSV…PTYE), 108–130 (FLVP…MLLS), 137–156 (ILYL…VILL), and 176–198 (LMGL…SWFY).

It belongs to the UPF0056 (MarC) family.

It is found in the cell membrane. This chain is UPF0056 membrane protein bbp_399, found in Buchnera aphidicola subsp. Baizongia pistaciae (strain Bp).